Here is a 504-residue protein sequence, read N- to C-terminus: Fumitremorgin C monooxygenase (504 aa).

Residues 12-32 (LGVVGASLIVILGIILLFPLG) traverse the membrane as a helical segment. A heme-binding site is contributed by cysteine 442.

Belongs to the cytochrome P450 family. The cofactor is heme.

It is found in the membrane. It catalyses the reaction fumitremorgin C + 2 reduced [NADPH--hemoprotein reductase] + 2 O2 = 12alpha,13alpha-dihydroxyfumitremorgin C + 2 oxidized [NADPH--hemoprotein reductase] + 2 H2O + 2 H(+). The protein operates within mycotoxin biosynthesis. Its function is as follows. Cytochrome P450 monooxygenase; part of the gene cluster that mediates the biosynthesis of fumitremorgins, indole alkaloids that carry not only intriguing chemical structures, but also interesting biological and pharmacological activities. The biosynthesis of fumitremorgin-type alkaloids begins by condensation of the two amino acids L-tryptophan and L-proline to brevianamide F, catalyzed by the non-ribosomal peptide synthetase ftmA. Brevianamide F is then prenylated by the prenyltransferase ftmPT1/ftmB in the presence of dimethylallyl diphosphate, resulting in the formation of tryprostatin B. The three cytochrome P450 monooxygenases, ftmP450-1/ftmC, ftmP450-2/ftmE and ftmP450-3/FtmG, are responsible for the conversion of tryprostatin B to 6-hydroxytryprostatin B, tryprostatin A to fumitremorgin C and fumitremorgin C to 12,13-dihydroxyfumitremorgin C, respectively. The putative methyltransferase ftmMT/ftmD is expected for the conversion of 6-hydroxytryprostatin B to tryprostatin A. FtmPT2/FtmH catalyzes the prenylation of 12,13-dihydroxyfumitre-morgin C in the presence of dimethylallyl diphosphate, resulting in the formation of fumitremorgin B. Fumitremorgin B is further converted to verruculogen by ftmOx1/ftmF via the insertion of an endoperoxide bond between the two prenyl moieties. In some fungal species, verruculogen is further converted to fumitremorgin A, but the enzymes involved in this step have not been identified yet. The polypeptide is Fumitremorgin C monooxygenase (Aspergillus fumigatus (Neosartorya fumigata)).